A 20-amino-acid polypeptide reads, in one-letter code: Antimicrobial peptide AJN-10 (20 aa).

It is found in the secreted. In terms of biological role, displays antimicrobial activity against the Gram-negative bacterium A.hydrophila. This Anguilla japonica (Japanese eel) protein is Antimicrobial peptide AJN-10.